Reading from the N-terminus, the 170-residue chain is Archaemetzincin (170 aa).

Zn(2+) is bound at residue His-110. Glu-111 serves as the catalytic Proton acceptor. The Zn(2+) site is built by His-114, His-120, Cys-121, Cys-125, Cys-144, and Cys-147.

Belongs to the peptidase M54 family. In terms of assembly, monomer. Zn(2+) is required as a cofactor.

Its function is as follows. Probable zinc metalloprotease whose natural substrate is unknown. This Nanoarchaeum equitans (strain Kin4-M) protein is Archaemetzincin.